The following is a 154-amino-acid chain: uncharacterized protein (154 aa).

Positions 14-146 (AMNLYRVFAR…LIVLLKKAGI (133 aa)) constitute an HTH marR-type domain. Residues 60 to 83 (LQQIGSRLLLVSGNVTYVIDKLER) constitute a DNA-binding region (H-T-H motif).

This is an uncharacterized protein from Bacillus subtilis (strain 168).